The following is a 452-amino-acid chain: MGSSQSVEIPGGGTEGYHVLRVQENSPGHRAGLEPFFDFIVSINGSRLNKDNDTLKDLLKANVEKPVKMLIYSSKTLELRETSVTPSNLWGGQGLLGVSIRFCSFDGANENVWHVLEVESNSPAALAGLRPHSDYIIGADTVMNESEDLFSLIETHEAKPLKLYVYNTDTDNCREVIITPNSAWGGEGSLGCGIGYGYLHRIPTRPFEEGKKISLPGQMAGTPITPLKDGFTEVQLSSVNPPSLSPPGTTGIEQSLTGLSISSTPPAVSSVLSTGVPTVPLLPPQVNQSLTSVPPMNPATTLPGLMPLPAGLPNLPNLNLNLPAPHIMPGVGLPELVNPGLPPLPSMPPRNLPGIAPLPLPSEFLPSFPLVPESSSAASSGELLSSLPPTSNAPSDPATTTAKADAASSLTVDVTPPTAKAPTTVEDRVGDSTPVSEKPVSAAVDANASESP.

Glycine 2 is lipidated: N-myristoyl glycine. PDZ GRASP-type domains are found at residues 15-105 and 111-199; these read EGYH…FCSF and NVWH…YGYL. Residues 15 to 215 form a GRASP region; it reads EGYHVLRVQE…PFEEGKKISL (201 aa). 2 positions are modified to dimethylated arginine: arginine 30 and arginine 47. The important for membrane binding stretch occupies residues 194 to 199; it reads IGYGYL. At serine 214 the chain carries Phosphoserine. 2 positions are modified to phosphothreonine: threonine 222 and threonine 225. A compositionally biased stretch (low complexity) spans 372–424; sequence PESSSAASSGELLSSLPPTSNAPSDPATTTAKADAASSLTVDVTPPTAKAPTT. The interval 372–452 is disordered; the sequence is PESSSAASSG…AVDANASESP (81 aa). Phosphoserine is present on serine 409. Residues threonine 415 and threonine 433 each carry the phosphothreonine modification. 4 positions are modified to phosphoserine: serine 436, serine 441, serine 449, and serine 451.

It belongs to the GORASP family. Homodimer. Homooligomer. ER stress induces phosphorylation-dependent monomerization. Interacts with BLZF1/Golgin 45. Identified in a complex with RAB2 and GORASP2. Interacts with JAM2 and JAM3. Interacts with members of the p24 cargo receptors. Interacts with CNIH1 and the cytoplasmic domain of transmembrane TGFA, prior its transit in the trans-Golgi. Interacts with KCTD5. Interacts with TMED2 and TMED3. Interacts with SEC16A in response to ER stress. Interacts (via PDZ GRASP-type 1 domain) with core-glycosylated CFTR in response to ER stress. Myristoylated. Myristoylation is essential for the Golgi targeting. Post-translationally, palmitoylated. In terms of processing, phosphorylated in mitotic cells. ER stress-induced phosphorylation at Ser-441 induces monomerization and subsequent relocalization from Golgi to ER which is essential for mediating unconventional (ER/Golgi-independent) trafficking of CFTR to the cell membrane.

Its subcellular location is the golgi apparatus membrane. It localises to the endoplasmic reticulum membrane. The protein resides in the golgi apparatus. Functionally, key structural protein of the Golgi apparatus. The membrane cisternae of the Golgi apparatus adhere to each other to form stacks, which are aligned side by side to form the Golgi ribbon. Acting in concert with GORASP1/GRASP65, is required for the formation and maintenance of the Golgi ribbon, and may be dispensable for the formation of stacks. However, other studies suggest that GORASP2 plays a role in the assembly and membrane stacking of the Golgi cisternae, and in the process by which Golgi stacks reform after breakdown during mitosis and meiosis. May regulate the intracellular transport and presentation of a defined set of transmembrane proteins, such as transmembrane TGFA. Required for normal acrosome formation during spermiogenesis and normal male fertility, probably by promoting colocalization of JAM2 and JAM3 at contact sites between germ cells and Sertoli cells. Mediates ER stress-induced unconventional (ER/Golgi-independent) trafficking of core-glycosylated CFTR to cell membrane. The polypeptide is Golgi reassembly-stacking protein 2 (GORASP2) (Homo sapiens (Human)).